Here is a 143-residue protein sequence, read N- to C-terminus: Large-conductance mechanosensitive channel (143 aa).

Helical transmembrane passes span 21–41 (VGVIIGAAFGKIVDSIVADII), 44–64 (VVGLVFGKLDFSNLYVVLGTV), and 86–106 (GNFITIAVNFVILAFIIFMMV).

It belongs to the MscL family. Homopentamer.

Its subcellular location is the cell inner membrane. Its function is as follows. Channel that opens in response to stretch forces in the membrane lipid bilayer. May participate in the regulation of osmotic pressure changes within the cell. The chain is Large-conductance mechanosensitive channel from Variovorax paradoxus (strain S110).